The sequence spans 291 residues: NAD kinase (291 aa).

D55 serves as the catalytic Proton acceptor. Residues 55 to 56, R60, 130 to 131, D160, and 171 to 176 each bind NAD(+); these read DG, NE, and TAYAFS.

The protein belongs to the NAD kinase family. The cofactor is a divalent metal cation.

The protein resides in the cytoplasm. It carries out the reaction NAD(+) + ATP = ADP + NADP(+) + H(+). In terms of biological role, involved in the regulation of the intracellular balance of NAD and NADP, and is a key enzyme in the biosynthesis of NADP. Catalyzes specifically the phosphorylation on 2'-hydroxyl of the adenosine moiety of NAD to yield NADP. In Corynebacterium glutamicum (strain ATCC 13032 / DSM 20300 / JCM 1318 / BCRC 11384 / CCUG 27702 / LMG 3730 / NBRC 12168 / NCIMB 10025 / NRRL B-2784 / 534), this protein is NAD kinase.